The chain runs to 134 residues: Large ribosomal subunit protein bL19 (134 aa).

The interval 108–134 (KSARIVERSDRSDKAKAQKAAAATAAE) is disordered. Over residues 111 to 123 (RIVERSDRSDKAK) the composition is skewed to basic and acidic residues. The span at 125–134 (QKAAAATAAE) shows a compositional bias: low complexity.

The protein belongs to the bacterial ribosomal protein bL19 family.

Functionally, this protein is located at the 30S-50S ribosomal subunit interface and may play a role in the structure and function of the aminoacyl-tRNA binding site. This Methylorubrum extorquens (strain PA1) (Methylobacterium extorquens) protein is Large ribosomal subunit protein bL19.